The primary structure comprises 78 residues: MDSEEPPNVRVACSGDIDEVVRLMHDAAAWMSAKGTPAWDVARIDRTFAETFVLRSELLVASCSDGIVGCCTLSAEDP.

This is an uncharacterized protein from Escherichia coli.